A 275-amino-acid chain; its full sequence is 4-hydroxy-tetrahydrodipicolinate reductase (275 aa).

NAD(+) contacts are provided by residues 13–18 (GAAGKM), 108–110 (GTT), and 134–137 (VPNF). His-164 (proton donor/acceptor) is an active-site residue. His-165 contacts (S)-2,3,4,5-tetrahydrodipicolinate. The active-site Proton donor is the Lys-168. 174–175 (GT) lines the (S)-2,3,4,5-tetrahydrodipicolinate pocket.

The protein belongs to the DapB family.

The protein localises to the cytoplasm. It catalyses the reaction (S)-2,3,4,5-tetrahydrodipicolinate + NAD(+) + H2O = (2S,4S)-4-hydroxy-2,3,4,5-tetrahydrodipicolinate + NADH + H(+). The enzyme catalyses (S)-2,3,4,5-tetrahydrodipicolinate + NADP(+) + H2O = (2S,4S)-4-hydroxy-2,3,4,5-tetrahydrodipicolinate + NADPH + H(+). Its pathway is amino-acid biosynthesis; L-lysine biosynthesis via DAP pathway; (S)-tetrahydrodipicolinate from L-aspartate: step 4/4. In terms of biological role, catalyzes the conversion of 4-hydroxy-tetrahydrodipicolinate (HTPA) to tetrahydrodipicolinate. The sequence is that of 4-hydroxy-tetrahydrodipicolinate reductase from Gloeothece citriformis (strain PCC 7424) (Cyanothece sp. (strain PCC 7424)).